The sequence spans 108 residues: Abdominal ganglion neuropeptide R3-14 (108 aa).

Residues 1 to 23 (MQVLHLCLAVSIAVALLSQAAWS) form the signal peptide. Pyrrolidone carboxylic acid (Glu); partial is present on residues Glu24 and Glu52. Position 66 is a pyrrolidone carboxylic acid (Gln66).

In terms of processing, the partial formation of pyroglutamate from N-terminal glutamic acid in peptides isolated from single cells is detected by mass spectrometry. There are indications this modification depends on a heat sensitive factor. Neurons R3-R14. A cluster of 12 giant neurons located on the right side of the abdominal ganglion.

The protein localises to the secreted. Its function is as follows. HRBP is a myoactive peptide that excites Aplysia heart and enhances gut motility in vitro. The sequence is that of Abdominal ganglion neuropeptide R3-14 from Aplysia californica (California sea hare).